A 1631-amino-acid polypeptide reads, in one-letter code: MERRAAGPGWAAYERLTAEEMDEQRRQNVAYQYLCRLEEAKRWMEACLKEELPSPVELEESLRNGVLLAKLGHCFAPSVVPLKKIYDVEQLRYQATGLHFRHTDNINFWLSAIAHIGLPSTFFPETTDIYDKKNMPRVVYCIHALSLFLFRLGLAPQIHDLYGKVKFTAEELSNMASELAKYGLQLPAFSKIGGILANELSVDEAAVHAAVLAINEAVERGVVEDTLAALQNPSALLENLREPLAAVYQEMLAQAKMEKAANARNHDDRESQDIYDHYLTQAEIQGNINHVNVHGALEVVDDALERQSPEALLKALQDPALALRGVRRDFADWYLEQLNSDREQKAQELGLVELLEKEEVQAGVAAANTKGDQEQAMLHAVQRINKAIRRRVAADTVKELMCPEAQLPPVYPVASSMYQLELAVLQQQQGELGQEELFVAVEMLSAVVLINRALEARDASGFWSSLVNPATGLAEVEGENAQRYFDALLKLRQERGMGEDFLSWNDLQATVSQVNAQTQEETDRVLAVSLINEALDKGSPEKTLSALLLPAAGLDDVSLPVAPRYHLLLVAAKRQKAQVTGDPGAVLWLEEIRQGVVRANQDTNTAQRMALGVAAINQAIKEGKAAQTERVLRNPAVALRGVVPDCANGYQRALESAMAKKQRPADTAFWVQHDMKDGTAYYFHLQTFQGIWEQPPGCPLNTSHLTREEIQSAVTKVTAAYDRQQLWKANVGFVIQLQARLRGFLVRQKFAEHSHFLRTWLPAVIKIQAHWRGYRQRKIYLEWLQYFKANLDAIIKIQAWARMWAARRQYLRRLHYFQKNVNSIVKIQAFFRARKAQDDYRILVHAPHPPLSVVRRFAHLLNQSQQDFLAEAELLKLQEEVVRKIRSNQQLEQDLNIMDIKIGLLVKNRITLQEVVSHCKKLTKRNKEQLSDMMVLDKQKGLKSLSKEKRQKLEAYQHLFYLLQTQPIYLAKLIFQMPQNKTTKFMEAVIFSLYNYASSRREAYLLLQLFKTALQEEIKSKVEQPQDVVTGNPTVVRLVVRFYRNGRGQSALQEILGKVIQDVLEDKVLSVHTDPVHLYKNWINQTEAQTGQRSHLPYDVTPEQALSHPEVQRRLDIALRNLLAMTDKFLLAITSSVDQIPYGMRYVAKVLKATLAEKFPDATDSEVYKVVGNLLYYRFLNPAVVAPDAFDIVAMAAGGALAAPQRHALGAVAQLLQHAAAGKAFSGQSQHLRVLNDYLEETHLKFRKFIHRACQVPEPEERFAVDEYSDMVAVAKPMVYITVGELVNTHRLLLEHQDCIAPDHQDPLHELLEDLGELPTIPDLIGESIAADGHTDLSKLEVSLTLTNKFEGLEADADDSNTRSLLLSTKQLLADIIQFHPGDTLKEILSLSASREQEAAHKQLMSRRQACTAQTPEPLRRHRSLTAHSLLPLAEKQRRVLRNLRRLEALGLVSARNGYQGLVDELAKDIRNQHRHRHRRKAELVKLQATLQGLSTKTTFYEEQGDYYSQYIRACLDHLAPDSKSSGKGKKQPSLHYTAAQLLEKGVLVEIEDLPASHFRNVIFDITPGDEAGKFEVNAKFLGVDMERFQLHYQDLLQLQYEGVAVMKLFNKAKVNVNLLIFLLNKKFLRK.

The 116-residue stretch at 34–149 (LCRLEEAKRW…YCIHALSLFL (116 aa)) folds into the Calponin-homology (CH) domain. Tyr162 bears the Phosphotyrosine mark. Ser539 carries the phosphoserine modification. IQ domains are found at residues 730–759 (NVGF…FLRT), 760–789 (WLPA…YFKA), 790–819 (NLDA…YFQK), and 820–849 (NVNS…APHP). The Ras-GAP domain occupies 1004 to 1253 (YLLLQLFKTA…LKFRKFIHRA (250 aa)). Residue Ser1424 is modified to Phosphoserine.

The sequence is that of Ras GTPase-activating-like protein IQGAP3 (IQGAP3) from Homo sapiens (Human).